Reading from the N-terminus, the 99-residue chain is Acylphosphatase-1 (99 aa).

Alanine 2 carries the N-acetylalanine modification. Residues 9–99 (SVDYEIFGKV…LDYSDFQIVK (91 aa)) enclose the Acylphosphatase-like domain. Active-site residues include arginine 24 and asparagine 42.

It belongs to the acylphosphatase family. Organ-common type isozyme is found in many different tissues.

The catalysed reaction is an acyl phosphate + H2O = a carboxylate + phosphate + H(+). The protein is Acylphosphatase-1 (ACYP1) of Homo sapiens (Human).